Here is a 428-residue protein sequence, read N- to C-terminus: D-serine dehydratase (428 aa).

An N6-(pyridoxal phosphate)lysine modification is found at lysine 57. Positions 203, 210, 255, 286, and 287 each coordinate pyridoxal 5'-phosphate. Zn(2+) is bound by residues histidine 398 and cysteine 400.

The protein belongs to the DSD1 family. In terms of assembly, homodimer. Pyridoxal 5'-phosphate is required as a cofactor. It depends on Zn(2+) as a cofactor.

It catalyses the reaction D-serine = pyruvate + NH4(+). With respect to regulation, sodium cyanoborohydride, N-ethylmaleimide, hydroxylamine, phenyhydrazin and EDTA are inhibitors of the catalytic activity. Functionally, catalyzes the conversion of D-serine to pyruvate and ammonia. May play a role in D-serine detoxification. The protein is D-serine dehydratase of Saccharomyces cerevisiae (strain ATCC 204508 / S288c) (Baker's yeast).